The following is a 270-amino-acid chain: Undecaprenyl-diphosphatase 1 (270 aa).

7 helical membrane passes run 5–25 (YYVLKYLILGLFQGLTEPIPI), 42–62 (IEGFSFELLVNSASLLAVLLI), 89–109 (FFFIIYLVIATIPAGVIGVLF), 117–137 (LKGVKMVGISLLITAVGLWII), 192–212 (FSFLLYIPVSLGGLLLSITDI), 220–240 (TLFVPYVVAFIATFIMTYISL), and 250–270 (GNLKYFSFYCIIVGVLTLIFL).

Belongs to the UppP family.

Its subcellular location is the cell membrane. The enzyme catalyses di-trans,octa-cis-undecaprenyl diphosphate + H2O = di-trans,octa-cis-undecaprenyl phosphate + phosphate + H(+). In terms of biological role, catalyzes the dephosphorylation of undecaprenyl diphosphate (UPP). Confers resistance to bacitracin. The polypeptide is Undecaprenyl-diphosphatase 1 (Bacillus cereus (strain ATCC 14579 / DSM 31 / CCUG 7414 / JCM 2152 / NBRC 15305 / NCIMB 9373 / NCTC 2599 / NRRL B-3711)).